The sequence spans 188 residues: Putative 3-methyladenine DNA glycosylase (188 aa).

This sequence belongs to the DNA glycosylase MPG family.

In Ehrlichia ruminantium (strain Gardel), this protein is Putative 3-methyladenine DNA glycosylase.